The sequence spans 255 residues: Sporulation-specific N-acetylmuramoyl-L-alanine amidase (255 aa).

In terms of domain architecture, MurNAc-LAA spans Ile4–Glu172. Zn(2+)-binding residues include His10, Glu24, and His79. Glu141 is an active-site residue. Residues Thr180–Glu254 enclose the SPOR domain. A run of 2 repeats spans residues Gly184–Asp219 and Gly220–Ser255. A 2 X 35 AA approximate tandem repeats region spans residues Gly184 to Ser255.

Belongs to the N-acetylmuramoyl-L-alanine amidase 3 family. It depends on Zn(2+) as a cofactor.

The protein resides in the secreted. Its subcellular location is the cell wall. The enzyme catalyses Hydrolyzes the link between N-acetylmuramoyl residues and L-amino acid residues in certain cell-wall glycopeptides.. Inhibited by EDTA. Functionally, autolysins are involved in some important biological processes such as cell separation, cell-wall turnover, competence for genetic transformation, formation of the flagella - in particular of its basal body - and sporulation. CwlC is able to hydrolyze type A cell walls such as B.subtilis. Its main function is to lyze the mother cell wall peptidoglycan, playing a role during sporulation. The polypeptide is Sporulation-specific N-acetylmuramoyl-L-alanine amidase (cwlC) (Bacillus subtilis (strain 168)).